Reading from the N-terminus, the 34-residue chain is Photosystem II reaction center protein Y (34 aa).

The Lumenal segment spans residues 1–5; sequence DWRVL. A helical transmembrane segment spans residues 6-22; it reads VVLLPVLLAAGWAVRNI. At 23-34 the chain is on the cytoplasmic side; that stretch reads LPYAVKQVQKLL.

The protein belongs to the PsbY family. PSII is composed of 1 copy each of membrane proteins PsbA, PsbB, PsbC, PsbD, PsbE, PsbF, PsbH, PsbI, PsbJ, PsbK, PsbL, PsbM, PsbT, PsbX, PsbY, PsbZ, Psb30/Ycf12, peripheral proteins PsbO, CyanoQ (PsbQ), PsbU, PsbV and a large number of cofactors. It forms dimeric complexes. This protein is only loosely associated with PSII, and is not often found in crystals. PSII binds multiple chlorophylls, carotenoids and specific lipids. is required as a cofactor.

It localises to the cellular thylakoid membrane. In terms of biological role, loosely associated component of the core of photosystem II (PSII). PSII is a light-driven water plastoquinone oxidoreductase, using light energy to abstract electrons from H(2)O, generating a proton gradient subsequently used for ATP formation. This is Photosystem II reaction center protein Y from Thermostichus vulcanus (Synechococcus vulcanus).